A 191-amino-acid chain; its full sequence is Transcription factor HES-2 (191 aa).

Positions 1 to 26 are disordered; that stretch reads MAPNVALADSMHNYQPKPGKRNQEAS. One can recognise a bHLH domain in the interval 28–85; sequence LRKTLKPLMEKRRRARINESLNQLKTLILPLIGKDNSRYSKLEKADILEMTVRFLRDI. The region spanning 97–130 is the Orange domain; sequence YKEGYRACVERLSAILGKSHVLTGEASNRLLEYL. Polar residues-rich tracts occupy residues 159–173 and 182–191; these read RTSQFGSPLQNQPSS and QLNSSIWRPW. The tract at residues 159-191 is disordered; it reads RTSQFGSPLQNQPSSHRPAPCPPQLNSSIWRPW. The WRPW motif motif lies at 188-191; sequence WRPW.

Transcription repression requires formation of a complex with a corepressor protein of the Groucho/TLE family. Homodimer, and heterodimer with the other bHLH proteins neurod1, neurod4/ath3, hes1/hairy1 and hes6r. Weakly interacts with the bHLH protein hey1/hrt1. In terms of tissue distribution, expressed in the animal half of the early cleavage stage embryo. During neurulation and organogenesis, the otic vesicles and retina are the main sites of expression; expression in otic placodes begins as early as stage 13.5, persisting in the otic vesicles at stage 30 and beyond. Also transiently expressed in the olfactory placodes. In addition, weakly expressed in primary neurons. Expression in the retina begins at stage 21, and is seen throughout the neural retina by stage 30. From stage 35 onwards, expression progressively declines in the central retina, while remaining high in the margins. At stage 41, expression becomes restricted to the ciliary marginal zone (CMZ) of the retina, the only region where retinogenesis is still occurring.

Its subcellular location is the nucleus. Transcriptional repressor. Essential in the retina to govern glial versus neuronal differentiation. Promotes gliogenesis through the inhibition of neuronal differentiation by at least two distinct mechanisms; represses proneural gene transcription, and also physically interacts with proneural proteins, including neurod1. The polypeptide is Transcription factor HES-2 (hes2) (Xenopus laevis (African clawed frog)).